Reading from the N-terminus, the 79-residue chain is Large ribosomal subunit protein uL29 (79 aa).

This sequence belongs to the universal ribosomal protein uL29 family.

In Nocardia farcinica (strain IFM 10152), this protein is Large ribosomal subunit protein uL29.